Consider the following 579-residue polypeptide: Vitamin B6 transporter TPN1 (579 aa).

At 1 to 98 (MNRDNMDTTK…LHVAGLWLSA (98 aa)) the chain is on the cytoplasmic side. A helical membrane pass occupies residues 99-119 (TGGLSSMSSFLLGPLLFGLSF). The Extracellular segment spans residues 120–122 (RES). Residues 123–143 (VASSLISVTIGCLIAAYCSIM) traverse the membrane as a helical segment. The Cytoplasmic segment spans residues 144–157 (GPQSGCRQMVTARY). Residues 158 to 178 (LFGWWFVKLVALASIIGVMGW) traverse the membrane as a helical segment. Topologically, residues 179-198 (SVVNSVVGGEMLAAISNDKV) are extracellular. A helical membrane pass occupies residues 199 to 219 (PLWVGIVIVTVCSFLVAIFGI). The Cytoplasmic portion of the chain corresponds to 220–221 (KQ). The helical transmembrane segment at 222 to 242 (VIKVETYLSVPVLTAFLLLYI) threads the bilayer. Over 243-274 (SSSDKYSFVNAYVSKGNLDSSTRKGNWMSFFS) the chain is Extracellular. A helical transmembrane segment spans residues 275–295 (LCYSITATWGSITADYYILFP). Residues 296–302 (EDTPYIQ) are Cytoplasmic-facing. Residues 303-323 (IFCLTFFGTFLPTCFVGILGL) traverse the membrane as a helical segment. Topologically, residues 324–362 (LLASVAMSYKPWSVEYDSHGMGGLLWAGFQRWNGFGKFC) are extracellular. Residues 363-383 (VVVLVFSLVSNNIINTYSAAF) traverse the membrane as a helical segment. The Cytoplasmic portion of the chain corresponds to 384-394 (SIQLSSVFCAK). Residues 395–415 (IPRWFWSIVCTIICLVCALIG) traverse the membrane as a helical segment. Over 416-421 (RNHFST) the chain is Extracellular. Residues 422 to 442 (ILGNFLPMIGYWISMYFILLF) form a helical membrane-spanning segment. Over 443 to 519 (EENLVFRRFF…EVLTHGYAAT (77 aa)) the chain is Cytoplasmic. Residues 520 to 540 (FAFIVGVAGVVVGMAQAYWIG) form a helical membrane-spanning segment. At 541 to 545 (PIAAK) the chain is on the extracellular side. A helical membrane pass occupies residues 546-566 (FGEYGGDVAMWLSMAFSGVVY). Over 567-579 (PPCRYLELRKFGR) the chain is Cytoplasmic.

The protein belongs to the purine-cytosine permease (2.A.39) family.

The protein localises to the membrane. Functionally, thiamine-regulated, high affinity import carrier of pyridoxine, pyridoxal and pyridoxamine. The chain is Vitamin B6 transporter TPN1 (TPN1) from Saccharomyces cerevisiae (strain ATCC 204508 / S288c) (Baker's yeast).